The sequence spans 261 residues: Putative glyoxylase CFP32 (261 aa).

VOC domains lie at 11–129 and 143–257; these read TPNW…LWQA and TLIW…VLKP. Glyoxalase stretches follow at residues 13-123 and 149-252; these read NWVD…TGAA and LLTD…GAIF.

In Mycobacterium bovis (strain ATCC BAA-935 / AF2122/97), this protein is Putative glyoxylase CFP32.